The following is a 426-amino-acid chain: Serine--tRNA ligase (426 aa).

The tract at residues 36 to 66 (KRKHLQERTQDLQSQRNTISKEIGQKKAKGE) is disordered. Polar residues predominate over residues 46-55 (DLQSQRNTIS). L-serine is bound at residue 233 to 235 (TAE). 264–266 (RSE) lines the ATP pocket. Glu-287 provides a ligand contact to L-serine. 351 to 354 (EISS) lines the ATP pocket. Ser-387 provides a ligand contact to L-serine.

It belongs to the class-II aminoacyl-tRNA synthetase family. Type-1 seryl-tRNA synthetase subfamily. In terms of assembly, homodimer. The tRNA molecule binds across the dimer.

It localises to the cytoplasm. The catalysed reaction is tRNA(Ser) + L-serine + ATP = L-seryl-tRNA(Ser) + AMP + diphosphate + H(+). It catalyses the reaction tRNA(Sec) + L-serine + ATP = L-seryl-tRNA(Sec) + AMP + diphosphate + H(+). Its pathway is aminoacyl-tRNA biosynthesis; selenocysteinyl-tRNA(Sec) biosynthesis; L-seryl-tRNA(Sec) from L-serine and tRNA(Sec): step 1/1. In terms of biological role, catalyzes the attachment of serine to tRNA(Ser). Is also able to aminoacylate tRNA(Sec) with serine, to form the misacylated tRNA L-seryl-tRNA(Sec), which will be further converted into selenocysteinyl-tRNA(Sec). This is Serine--tRNA ligase from Francisella tularensis subsp. tularensis (strain FSC 198).